The primary structure comprises 460 residues: MSVRFSSASRRLGSCGGAGSVRLSGGGAGFGVGSTGSVPGFGSGFTCAFGGSSSAGSYSGGLGGGSASCTAFTGNEHGLLSGNEKVTMQNLNDRLASYLDNVRALEEANADLEQKIKGWYEKFGPGSCRGLDHDYSRYFTVIDDLRNQIISATTSNANIVLQNDNARLTADDFRLKFENEQALHQSVDADVSSLRRVLDELTLCRTDLEIQLETLSEELAYLKKNHEEEMKALQCAAGGNVNVEMNAAPGVDLTVLLNNMRAEYEALAEQNRRDAEAWFNEKSASLQQQISDDAGATTSARNELTEMKRNLQTLEIELQSLLATKHSLECSLTETEGNYCAQLAQIQAQIGALEEQLHQVRTETEGQKLEYEQLLDIKVHLEKEIETYCRLIDGEDGSCAKSKGYGGPGHQIKDPSKATVVKTIVEEIDPRGKVLSSRVHSVEEKSTKVNNVKSEQRVPS.

Positions 1 to 83 (MSVRFSSASR…GNEHGLLSGN (83 aa)) are head. The tract at residues 84-119 (EKVTMQNLNDRLASYLDNVRALEEANADLEQKIKGW) is coil 1A. Residues 84 to 399 (EKVTMQNLND…RLIDGEDGSC (316 aa)) enclose the IF rod domain. The tract at residues 120-141 (YEKFGPGSCRGLDHDYSRYFTV) is linker 1. The tract at residues 142 to 233 (IDDLRNQIIS…KNHEEEMKAL (92 aa)) is coil 1B. Residues 234-256 (QCAAGGNVNVEMNAAPGVDLTVL) form a linker 12 region. The tract at residues 257–395 (LNNMRAEYEA…ETYCRLIDGE (139 aa)) is coil 2. Residues 396–460 (DGSCAKSKGY…NVKSEQRVPS (65 aa)) are tail. The tract at residues 435–460 (LSSRVHSVEEKSTKVNNVKSEQRVPS) is disordered. Positions 448 to 460 (KVNNVKSEQRVPS) are enriched in polar residues.

This sequence belongs to the intermediate filament family. As to quaternary structure, heterotetramer of two type I and two type II keratins. Interacts with KRT6A to form filaments.

It is found in the cytoplasm. Essential for the proper assembly of type I and type II keratin protein complexes and formation of keratin intermediate filaments in the inner root sheath (irs). This Bos taurus (Bovine) protein is Keratin, type I cytoskeletal 27.